A 226-amino-acid chain; its full sequence is Ethylene-responsive transcription factor-like protein At4g13040 (226 aa).

Disordered stretches follow at residues 63-109 (EERS…RKRV) and 195-226 (KKPK…SDKM). A compositionally biased stretch (basic residues) spans 97 to 109 (PPKRRKQHRRKRV). The segment at residues 105–171 (RRKRVHNQEP…REPNFELSEE (67 aa)) is a DNA-binding region (AP2/ERF). Positions 217-226 (EEEEQDSDKM) are enriched in acidic residues.

The protein belongs to the AP2/ERF transcription factor family.

It is found in the nucleus. Functionally, probably acts as a transcriptional activator. Binds to the GCC-box pathogenesis-related promoter element. May be involved in the regulation of gene expression by stress factors and by components of stress signal transduction pathways. The polypeptide is Ethylene-responsive transcription factor-like protein At4g13040 (Arabidopsis thaliana (Mouse-ear cress)).